The sequence spans 205 residues: Outer-membrane lipoprotein LolB (205 aa).

The first 17 residues, 1–17 (MRLRLFLAASALALLSG), serve as a signal peptide directing secretion. Residue C18 is the site of N-palmitoyl cysteine attachment. The S-diacylglycerol cysteine moiety is linked to residue C18.

It belongs to the LolB family. In terms of assembly, monomer.

It is found in the cell outer membrane. Functionally, plays a critical role in the incorporation of lipoproteins in the outer membrane after they are released by the LolA protein. The chain is Outer-membrane lipoprotein LolB from Pseudomonas paraeruginosa (strain DSM 24068 / PA7) (Pseudomonas aeruginosa (strain PA7)).